The chain runs to 257 residues: Aspartate/glutamate leucyltransferase (257 aa).

Belongs to the R-transferase family. Bpt subfamily.

The protein localises to the cytoplasm. The enzyme catalyses N-terminal L-glutamyl-[protein] + L-leucyl-tRNA(Leu) = N-terminal L-leucyl-L-glutamyl-[protein] + tRNA(Leu) + H(+). It catalyses the reaction N-terminal L-aspartyl-[protein] + L-leucyl-tRNA(Leu) = N-terminal L-leucyl-L-aspartyl-[protein] + tRNA(Leu) + H(+). In terms of biological role, functions in the N-end rule pathway of protein degradation where it conjugates Leu from its aminoacyl-tRNA to the N-termini of proteins containing an N-terminal aspartate or glutamate. This Rhodopseudomonas palustris (strain HaA2) protein is Aspartate/glutamate leucyltransferase.